We begin with the raw amino-acid sequence, 198 residues long: Nucleoid occlusion factor SlmA (198 aa).

The HTH tetR-type domain occupies 10 to 70 (NRREEILQSL…SLIEFIEDSL (61 aa)). A DNA-binding region (H-T-H motif) is located at residues 33-52 (TTAKLAASVGVSEAALYRHF). Residues 117-144 (EQDRLQGRINQLFERIEAQLRQVLREKR) are a coiled coil.

Belongs to the nucleoid occlusion factor SlmA family. In terms of assembly, homodimer. Interacts with FtsZ.

It is found in the cytoplasm. The protein resides in the nucleoid. Functionally, required for nucleoid occlusion (NO) phenomenon, which prevents Z-ring formation and cell division over the nucleoid. Acts as a DNA-associated cell division inhibitor that binds simultaneously chromosomal DNA and FtsZ, and disrupts the assembly of FtsZ polymers. SlmA-DNA-binding sequences (SBS) are dispersed on non-Ter regions of the chromosome, preventing FtsZ polymerization at these regions. This Salmonella agona (strain SL483) protein is Nucleoid occlusion factor SlmA.